The primary structure comprises 181 residues: MKASISIDEKKDFIRWFLNKHQMKTREAMWVLNYIAGHDQIVKYVHFVDNLEGCARGLSLSAHGVESEPFLFFKGSIMTTDPEKAFHDIRLNWDEELYVELHFEEAMTSPEYALVREDNPFAAVKLAEEEKEMADALIYQSVHQFSREKLLQQIDEALDTRDEATFHKLVRILQQMDTEKE.

It belongs to the UPF0302 family.

The protein is UPF0302 protein lin2035 of Listeria innocua serovar 6a (strain ATCC BAA-680 / CLIP 11262).